The sequence spans 371 residues: MQSTDLKRLLIPSLLGLAIVTGSAQAAAPLRPPQGYYAPVDKFKSGDNSEGCDAMPAPYTGALQFRSKYEGSDKARATLNVQSEQAFRDTTADITKIERGTSKRVMQFMRDGRPEQLDCTLAWLSAWAQADALMSKDFNHTGKSMRKWALGSMASAYLRLKFSDSHPLATHQEQAQKIEAWFSKMADQVVSDWDNLPLDKTNNHSYWAAWSVMATAVATNRRDLFDWAVKEYKVGANQVDADGFLPNELKRQQRALAYHNYALPPLAMIASFAQVNGVDLRQENHEALKRLGERVLAGVKDPDTFEKKNGKQQDMTDLKVDSKFAWLEPYCSLYTCAPETLERKHKMQPFKTFRLGGDLTKVYDPAHEKGS.

A signal peptide spans 1-26; that stretch reads MQSTDLKRLLIPSLLGLAIVTGSAQA. Substrate-binding positions include 67–68, 140–141, and Tyr-258; these read SK and HT.

The protein belongs to the polysaccharide lyase 5 family.

The protein resides in the periplasm. It catalyses the reaction Eliminative cleavage of alginate to give oligosaccharides with 4-deoxy-alpha-L-erythro-hex-4-enuronosyl groups at their non-reducing ends and beta-D-mannuronate at their reducing end.. Its function is as follows. Catalyzes the depolymerization of alginate by cleaving the beta-1,4 glycosidic bond between two adjacent sugar residues via a beta-elimination mechanism. May serve to degrade mislocalized alginate that is trapped in the periplasmic space. The protein is Alginate lyase of Pseudomonas fluorescens (strain ATCC BAA-477 / NRRL B-23932 / Pf-5).